The following is a 373-amino-acid chain: Queuine tRNA-ribosyltransferase (373 aa).

Aspartate 90 (proton acceptor) is an active-site residue. Residues 90–94 (DSGGF), aspartate 144, glutamine 193, and glycine 220 each bind substrate. An RNA binding region spans residues 251–257 (GVGTPED). Aspartate 270 serves as the catalytic Nucleophile. The tract at residues 275–279 (TRNAR) is RNA binding; important for wobble base 34 recognition. Positions 308, 310, 313, and 339 each coordinate Zn(2+).

It belongs to the queuine tRNA-ribosyltransferase family. As to quaternary structure, homodimer. Within each dimer, one monomer is responsible for RNA recognition and catalysis, while the other monomer binds to the replacement base PreQ1. The cofactor is Zn(2+).

The catalysed reaction is 7-aminomethyl-7-carbaguanine + guanosine(34) in tRNA = 7-aminomethyl-7-carbaguanosine(34) in tRNA + guanine. It functions in the pathway tRNA modification; tRNA-queuosine biosynthesis. Functionally, catalyzes the base-exchange of a guanine (G) residue with the queuine precursor 7-aminomethyl-7-deazaguanine (PreQ1) at position 34 (anticodon wobble position) in tRNAs with GU(N) anticodons (tRNA-Asp, -Asn, -His and -Tyr). Catalysis occurs through a double-displacement mechanism. The nucleophile active site attacks the C1' of nucleotide 34 to detach the guanine base from the RNA, forming a covalent enzyme-RNA intermediate. The proton acceptor active site deprotonates the incoming PreQ1, allowing a nucleophilic attack on the C1' of the ribose to form the product. After dissociation, two additional enzymatic reactions on the tRNA convert PreQ1 to queuine (Q), resulting in the hypermodified nucleoside queuosine (7-(((4,5-cis-dihydroxy-2-cyclopenten-1-yl)amino)methyl)-7-deazaguanosine). The sequence is that of Queuine tRNA-ribosyltransferase from Campylobacter lari (strain RM2100 / D67 / ATCC BAA-1060).